A 503-amino-acid chain; its full sequence is Glycerol kinase (503 aa).

An ADP-binding site is contributed by Thr-14. ATP is bound by residues Thr-14, Thr-15, and Ser-16. Thr-14 contacts sn-glycerol 3-phosphate. Arg-18 is a binding site for ADP. Arg-84, Glu-85, Tyr-136, and Asp-246 together coordinate sn-glycerol 3-phosphate. Glycerol is bound by residues Arg-84, Glu-85, Tyr-136, Asp-246, and Gln-247. ADP-binding residues include Thr-268 and Gly-311. Positions 268, 311, 315, and 412 each coordinate ATP. Gly-412 and Asn-416 together coordinate ADP.

It belongs to the FGGY kinase family. Homotetramer and homodimer (in equilibrium). Heterodimer with EIIA-Glc. Binds 1 zinc ion per glycerol kinase EIIA-Glc dimer. The zinc ion is important for dimerization.

It catalyses the reaction glycerol + ATP = sn-glycerol 3-phosphate + ADP + H(+). It functions in the pathway polyol metabolism; glycerol degradation via glycerol kinase pathway; sn-glycerol 3-phosphate from glycerol: step 1/1. Its activity is regulated as follows. Activity of this regulatory enzyme is affected by several metabolites. Allosterically and non-competitively inhibited by fructose 1,6-bisphosphate (FBP) and unphosphorylated phosphocarrier protein EIIA-Glc (III-Glc), an integral component of the bacterial phosphotransferase (PTS) system. Its function is as follows. Key enzyme in the regulation of glycerol uptake and metabolism. Catalyzes the phosphorylation of glycerol to yield sn-glycerol 3-phosphate. This chain is Glycerol kinase, found in Klebsiella pneumoniae (strain 342).